The primary structure comprises 488 residues: N-succinylglutamate 5-semialdehyde dehydrogenase (488 aa).

An NAD(+)-binding site is contributed by 221–226; sequence GSSRTG. Active-site residues include Glu-244 and Cys-278.

Belongs to the aldehyde dehydrogenase family. AstD subfamily.

The catalysed reaction is N-succinyl-L-glutamate 5-semialdehyde + NAD(+) + H2O = N-succinyl-L-glutamate + NADH + 2 H(+). Its pathway is amino-acid degradation; L-arginine degradation via AST pathway; L-glutamate and succinate from L-arginine: step 4/5. Functionally, catalyzes the NAD-dependent reduction of succinylglutamate semialdehyde into succinylglutamate. The sequence is that of N-succinylglutamate 5-semialdehyde dehydrogenase from Pseudomonas fluorescens (strain ATCC BAA-477 / NRRL B-23932 / Pf-5).